The sequence spans 269 residues: Lck-interacting transmembrane adapter 1 (269 aa).

At 1 to 7 the chain is on the extracellular side; sequence MRPPVPS. Residues 8–28 form a helical; Signal-anchor for type III membrane protein membrane-spanning segment; it reads APLALWVLGCFSLLLWLWALC. S-palmitoyl cysteine attachment occurs at residues C28 and C31. Over 29 to 269 the chain is Cytoplasmic; that stretch reads TACHRKRAQR…VYESIKEMGL (241 aa). The interval 102 to 133 is disordered; sequence STRSQVPNSAFPPRQLPRAPPAAPATAPSTSS. Residues 115–124 are compositionally biased toward pro residues; it reads RQLPRAPPAA. Y137, Y175, and Y207 each carry phosphotyrosine. Residues 137–140 are interaction with GRB2; that stretch reads YSNV. Interaction with CSK stretches follow at residues 175-178 and 207-210; these read YACI and YSRV. Residues Y242 and Y261 each carry the phosphotyrosine; by LYN or LCK modification. Residues 242 to 245 form an interaction with LCK and PIK3R1 region; sequence YEAI. Positions 261-264 are interaction with LCK, PLCG2 and PIK3R1; sequence YESI. At S263 the chain carries Phosphoserine.

As to quaternary structure, when phosphorylated in response to TCR stimulation and/or CD4 costimulation, interacts with LCK, CSK, FYN, PTPN11/SHP2, GRB2, PIK3R1 and GRAP2. When phosphorylated in response to BCR activation, interacts with LYN, PIK3R1, PLCG2 and GRB2. In terms of processing, palmitoylation of Cys-28 and Cys-31 is required for raft targeting. Phosphorylated on tyrosines upon TCR activation and/or CD4 coreceptor stimulation, or upon BCR stimulation; which leads to the recruitment of SH2-containing proteins. Expressed in spleen and lung. Present in primary B-cells and peripheral T-cells (at protein level).

It localises to the cell membrane. In terms of biological role, involved in BCR (B-cell antigen receptor)-mediated signaling in B-cells and TCR (T-cell antigen receptor)-mediated T-cell signaling in T-cells. In absence of TCR signaling, may be involved in CD4-mediated inhibition of T-cell activation. Couples activation of these receptors and their associated kinases with distal intracellular events such as calcium mobilization or MAPK activation through the recruitment of PLCG2, GRB2, GRAP2, and other signaling molecules. This Mus musculus (Mouse) protein is Lck-interacting transmembrane adapter 1 (Lime1).